The primary structure comprises 800 residues: Putative antiporter subunit mnhA2 (800 aa).

Helical transmembrane passes span 1–21 (MSLVYLLIAILVIMAMILLMS), 33–53 (IALVAPVISSIYFLIQIPSVA), 78–98 (GLSLMFSLIISLIGIAVFFYA), 118–138 (LFMFSMIGIVLSDNTILMYIF), 167–187 (FMITVFGGLALLVGFIMLYIM), 207–227 (GLFIPMIFMFLLGAFTKSAQF), 241–261 (TPVSAYLHSATMVKAGIFLLL), 273–293 (YIYIVTFVGLITMLFGSITAL), 300–320 (GILAYSTISQLGMIMAMVGIG), 331–351 (IASIYVFVLFGALFHLMNHAI), 387–407 (LVMTIAALSMAGVPFLNGFLS), 424–444 (FSLISMIAIVFVGVIASIFTF), 472–492 (PWLFSLPSLILMVLVPVIFFV), 527–547 (GFNIPLLLTIIIILLGSVLAI), 595–615 (IIMTLGIFMIIIGYGYIRIGL), 627–647 (GALEIILAIVTVTIGISLIFI), 651–671 (LTMVILNGVIGFVVTLFFIAM), 676–696 (LALTQLVVETITTILFIVSFS), 712–732 (IIKISVSLLMALIVVSLIFIT), and 768–788 (LDTLFEGLVLIITGLGIYTLL).

This sequence belongs to the CPA3 antiporters (TC 2.A.63) subunit A family. In terms of assembly, may form a heterooligomeric complex that consists of seven subunits: mnhA2, mnhB2, mnhC2, mnhD2, mnhE2, mnhF2 and mnhG2.

Its subcellular location is the cell membrane. The chain is Putative antiporter subunit mnhA2 (mnhA2) from Staphylococcus aureus (strain Mu3 / ATCC 700698).